The following is a 276-amino-acid chain: Caspase-6 (276 aa).

The propeptide occupies 1 to 5 (MTETD). The tract at residues 25–27 (KRR) is tri-arginine exosite. S62 carries the post-translational modification Phosphoserine. H104 is a catalytic residue. The segment at 108 to 125 (NHVYAYDAKIEIQTLTGL) is 130's region. The active site involves C146. Residues 163–175 (HQTDKLDNVTQVD) constitute a propeptide that is removed on maturation. A Phosphoserine modification is found at S239. S-palmitoyl cysteine attachment occurs at residues C246 and C259.

Belongs to the peptidase C14A family. In terms of assembly, heterotetramer that consists of two anti-parallel arranged heterodimers, each one formed by a 18 kDa (p18) and a 11 kDa (p11) subunit. Interacts with BIRC6/bruce. Interacts with RIPK3. Heterotetramer that consists of two anti-parallel arranged heterodimers, each one formed by a 18 kDa (Caspase-6 subunit p18) and a 11 kDa (Caspase-6 subunit p11) subunit. Phosphorylated by NUAK1; phosphorylation inhibits self-activation. Phosphorylation at Ser-239 by AMP-activated protein kinase (PRKAA1 or PRKAA2) inhibits autocleavage, preventing caspase activation, thereby preventing hepatocyte apoptosis. Post-translationally, palmitoylation by ZDHHC17 blocks dimerization and subsequent activation, leading to inhibit the cysteine protease activity. In terms of processing, can be cleaved and activated by different caspases, depending on the context. Cleaved and activated by caspase-8 (CASP8) and subsequently by caspase-3 (CASP3). Can also undergo autoactivation by mediating autocleavage at Asp-162 and Asp-175, while it is not able to cleave its N-terminal disordered prodomain. Cleaved and activated by CASP1, possibly in the context of inflammation. As to expression, highly expressed in lung, liver, kidney, testis, and heart. Lower levels in spleen, skeletal muscle and brain. Expressed in neurons.

It is found in the cytoplasm. The protein resides in the nucleus. The enzyme catalyses Strict requirement for Asp at position P1 and has a preferred cleavage sequence of Val-Glu-His-Asp-|-.. With respect to regulation, during activation, the N-terminal disordered prodomain is removed by cleavage. Concomitantly, double cleavage gives rise to a large 18-kDa and a small 11-kDa subunit. The two large and two small subunits then assemble to form the active CASP6 complex. Can be cleaved and activated by different caspases, depending on the context. Cleaved and activated by caspase-8 (CASP8) and subsequently by caspase-3 (CASP3). Can also undergo autoactivation by mediating autocleavage at Asp-162 and Asp-175, while it is not able to cleave its N-terminal disordered prodomain. Intramolecular cleavage at Asp-175 is a prerequisite for CASP6 self-activation. Cleaved and activated by CASP1 in neurons, possibly in the context of inflammation. Phosphorylation at Ser-239 inhibits autocleavage, preventing caspase activation. Functionally, cysteine protease that plays essential roles in programmed cell death, axonal degeneration, development and innate immunity. Acts as a non-canonical executioner caspase during apoptosis: localizes in the nucleus and cleaves the nuclear structural protein NUMA1 and lamin A/LMNA thereby inducing nuclear shrinkage and fragmentation. Lamin-A/LMNA cleavage is required for chromatin condensation and nuclear disassembly during apoptotic execution. Acts as a regulator of liver damage by promoting hepatocyte apoptosis: in absence of phosphorylation by AMP-activated protein kinase (AMPK), catalyzes cleavage of BID, leading to cytochrome c release, thereby participating in nonalcoholic steatohepatitis. Cleaves PARK7/DJ-1 in cells undergoing apoptosis. Involved in intrinsic apoptosis by mediating cleavage of RIPK1. Furthermore, cleaves many transcription factors such as NF-kappa-B and cAMP response element-binding protein/CREBBP. Cleaves phospholipid scramblase proteins XKR4 and XKR9. In addition to apoptosis, involved in different forms of programmed cell death. Plays an essential role in defense against viruses by acting as a central mediator of the ZBP1-mediated pyroptosis, apoptosis, and necroptosis (PANoptosis), independently of its cysteine protease activity. PANoptosis is a unique inflammatory programmed cell death, which provides a molecular scaffold that allows the interactions and activation of machinery required for inflammasome/pyroptosis, apoptosis and necroptosis. Mechanistically, interacts with RIPK3 and enhances the interaction between RIPK3 and ZBP1, leading to ZBP1-mediated inflammasome activation and cell death. Plays an essential role in axon degeneration during axon pruning which is the remodeling of axons during neurogenesis but not apoptosis. Regulates B-cell programs both during early development and after antigen stimulation. Its function is as follows. (Microbial infection) Proteolytically cleaves the N protein of coronaviruses. The cleavage leads to two fragments and modulates coronavirus replication by regulating IFN signaling. The two fragments produced by the cleavage interact with IRF3 inhibiting its nuclear translocation after activation and reduce the expression of IFNB and IFN-stimulated genes. The polypeptide is Caspase-6 (Mus musculus (Mouse)).